Consider the following 367-residue polypeptide: Secondary metabolism regulator laeA (367 aa).

The interval 1-82 (MFGQQQQQQP…PETYPGHEEN (82 aa)) is disordered. Polar residues predominate over residues 19 to 41 (LNHNSRWTPPNESAQPRRSSNAM). 2 stretches are compositionally biased toward basic and acidic residues: residues 47–56 (TDRDPAEGHP) and 71–82 (KSPETYPGHEEN).

The protein belongs to the methyltransferase superfamily. LaeA methyltransferase family. As to quaternary structure, component of the heterotrimeric velvet complex composed of laeA, veA and velB; VeA acting as a bridging protein between laeA and velB.

The protein localises to the nucleus. It carries out the reaction L-methionyl-[protein] + S-adenosyl-L-methionine = S-methyl-L-methionyl-[protein] + S-adenosyl-L-homocysteine. Its function is as follows. Methyltransferase that performs automethylation. No other methyl-accepting substrate has been identified yet. Component of the velvet transcription factor complex that acts as a global regulator for secondary metabolite gene expression. Controls the expression of the monacolin K gene clusters. Also regulates pigmentation. The chain is Secondary metabolism regulator laeA from Monascus pilosus (Red mold).